Consider the following 481-residue polypeptide: uncharacterized protein (481 aa).

The protein to M.tuberculosis RV2411c.

This is an uncharacterized protein from Synechocystis sp. (strain ATCC 27184 / PCC 6803 / Kazusa).